The chain runs to 423 residues: Glutamine synthetase, chloroplastic (423 aa).

The transit peptide at 1–51 directs the protein to the chloroplast; it reads MAQAVVPAMQCRVGVKAAAGRVWSAGRTRTGRGGASPGFKVMAVSTGSTGV. The 81-residue stretch at 70 to 150 folds into the GS beta-grasp domain; that stretch reads VIAEYIWVGG…VICDTYTPQG (81 aa). A disordered region spans residues 89 to 115; sequence RTISKPVEDPSELPKWNYDGSSTGQAP. Positions 154–423 constitute a GS catalytic domain; the sequence is PTNKRHRAAQ…LAAKKLALKV (270 aa).

This sequence belongs to the glutamine synthetase family. Homooctamer.

The protein localises to the plastid. Its subcellular location is the chloroplast. It carries out the reaction L-glutamate + NH4(+) + ATP = L-glutamine + ADP + phosphate + H(+). Functionally, the light-modulated chloroplast enzyme, encoded by a nuclear gene and expressed primarily in leaves, is responsible for the reassimilation of the ammonia generated by photorespiration. The polypeptide is Glutamine synthetase, chloroplastic (GLN2) (Zea mays (Maize)).